A 278-amino-acid polypeptide reads, in one-letter code: Tryptophan synthase alpha chain (278 aa).

Catalysis depends on proton acceptor residues Glu50 and Asp61.

The protein belongs to the TrpA family. Tetramer of two alpha and two beta chains.

It carries out the reaction (1S,2R)-1-C-(indol-3-yl)glycerol 3-phosphate + L-serine = D-glyceraldehyde 3-phosphate + L-tryptophan + H2O. Its pathway is amino-acid biosynthesis; L-tryptophan biosynthesis; L-tryptophan from chorismate: step 5/5. Its function is as follows. The alpha subunit is responsible for the aldol cleavage of indoleglycerol phosphate to indole and glyceraldehyde 3-phosphate. The protein is Tryptophan synthase alpha chain of Methylorubrum populi (strain ATCC BAA-705 / NCIMB 13946 / BJ001) (Methylobacterium populi).